Reading from the N-terminus, the 224-residue chain is Large ribosomal subunit protein bL25 (224 aa).

A disordered region spans residues 196 to 224 (VEEVDTDAEEVDAADVPATEQGSEEDKGE). Over residues 197–208 (EEVDTDAEEVDA) the composition is skewed to acidic residues.

It belongs to the bacterial ribosomal protein bL25 family. CTC subfamily. In terms of assembly, part of the 50S ribosomal subunit; part of the 5S rRNA/L5/L18/L25 subcomplex. Contacts the 5S rRNA. Binds to the 5S rRNA independently of L5 and L18.

This is one of the proteins that binds to the 5S RNA in the ribosome where it forms part of the central protuberance. The sequence is that of Large ribosomal subunit protein bL25 from Psychrobacter sp. (strain PRwf-1).